Here is a 1806-residue protein sequence, read N- to C-terminus: Collagen alpha-1(XI) chain (1806 aa).

The signal sequence occupies residues 1 to 35 (MEPWSSRWKTKRWLWDFTVTTLALTFLFQAREVRG). Positions 36-511 (AAPVDVLKAL…DGSKGPTISA (476 aa)) are cleaved as a propeptide — N-terminal propeptide. Intrachain disulfides connect Cys61/Cys243 and Cys182/Cys236. The 173-residue stretch at 71-243 (DTAYRVSKQA…DYCEHYSPDC (173 aa)) folds into the Laminin G-like domain. The nonhelical region stretch occupies residues 230-419 (KAAYDYCEHY…DITETSINGH (190 aa)). The tract at residues 420–508 (GAYGEKGQKG…YGGDGSKGPT (89 aa)) is triple-helical region (interrupted). A disordered region spans residues 439–508 (LVEGPPGPAG…YGGDGSKGPT (70 aa)). Residues 442–490 (GPPGPAGPAGIMGPPGLQGPTGPPGDPGDRGPPGRPGLPGADGLPGPPG) enclose the Collagen-like 1 domain. 2 stretches are compositionally biased toward low complexity: residues 449–461 (PAGI…LQGP) and 479–496 (LPGA…LMLP). The segment at 509–511 (ISA) is short nonhelical segment. Residues 512-528 (QEAQAQAILQQARIALR) form a telopeptide region. Residues 528-1563 (RGPPGPMGLT…TRRHTEGMQA (1036 aa)) form a disordered region. Positions 529–1542 (GPPGPMGLTG…PGSPGPPGEV (1014 aa)) are triple-helical region. Collagen-like domains lie at 532-586 (GPMG…GADG), 583-641 (GADG…EIGP), 616-674 (GERG…VDGP), and 643-699 (GLPG…PGPQ). 2 stretches are compositionally biased toward gly residues: residues 541–550 (GPVGGPGSSG) and 583–592 (GADGGRGMPG). An Allysine modification is found at Lys612. A compositionally biased stretch (low complexity) spans 641-662 (PRGLPGEAGPRGLLGPRGTPGA). The span at 699–710 (QGLPGPQGPIGP) shows a compositional bias: pro residues. Low complexity predominate over residues 717 to 728 (QGKPGLAGLPGA). Positions 807-816 (RGEDGPEGPK) are enriched in basic and acidic residues. 6 stretches are compositionally biased toward low complexity: residues 875–903 (KPGP…PGPK), 918–927 (RGPQGPQGPV), 941–960 (KDGL…QGKT), 971–981 (PQGPTGETGPI), 1032–1041 (RGLPGAQGAP), and 1058–1074 (SPGE…IGLP). Pro residues predominate over residues 1076–1085 (RPGPQGPPGP). Positions 1086-1110 (AGEKGAPGEKGPQGPAGRDGVQGPV) are enriched in low complexity. Residues 1162–1171 (GIAGGDGEPG) are compositionally biased toward gly residues. 2 stretches are compositionally biased toward pro residues: residues 1218–1229 (MGPPGPPGPRGP) and 1343–1362 (QPGP…PGKR). 2 stretches are compositionally biased toward low complexity: residues 1385–1394 (AEGPPGKTGP) and 1419–1428 (QGLPGAAGQD). Collagen-like domains follow at residues 1393 to 1450 (GPVG…GSKG), 1429 to 1487 (GPPG…AKGD), and 1483 to 1541 (GAKG…PPGE). Pro residues predominate over residues 1430–1439 (PPGPMGPPGL). Lys1452 carries the post-translational modification Allysine. Residues 1455–1464 (PGLIGLIGPP) show a composition bias toward low complexity. The span at 1483-1492 (GAKGDGGIPG) shows a compositional bias: gly residues. 2 stretches are compositionally biased toward pro residues: residues 1493 to 1509 (PAGP…PGPQ) and 1530 to 1539 (PGPPGSPGPP). Residues 1543 to 1563 (IQPLPILSSKKTRRHTEGMQA) are nonhelical region (C-terminal). A propeptide spans 1564 to 1806 (DADDNILDYS…FEVGPVCFLG (243 aa)) (C-terminal propeptide). Residues 1577 to 1805 (EEIFGSLNSL…GFEVGPVCFL (229 aa)) enclose the Fibrillar collagen NC1 domain. Cys1607 and Cys1639 form a disulfide bridge. Asp1625, Asn1627, Gln1628, Cys1630, and Asp1633 together coordinate Ca(2+). N-linked (GlcNAc...) asparagine glycosylation is present at Asn1640. Disulfide bonds link Cys1648-Cys1803 and Cys1714-Cys1757.

Belongs to the fibrillar collagen family. In terms of assembly, trimers composed of three different chains: alpha 1(XI), alpha 2(XI), and alpha 3(XI). Alpha 3(XI) is a post-translational modification of alpha 1(II). Alpha 1(V) can also be found instead of alpha 3(XI)=1(II). In terms of processing, prolines at the third position of the tripeptide repeating unit (G-X-Y) are hydroxylated in some or all of the chains. Post-translationally, N-glycosylated. Cartilage, placenta and some tumor or virally transformed cell lines. Isoforms using exon IIA or IIB are found in the cartilage while isoforms using only exon IIB are found in the tendon.

Its subcellular location is the secreted. The protein resides in the extracellular space. It localises to the extracellular matrix. In terms of biological role, may play an important role in fibrillogenesis by controlling lateral growth of collagen II fibrils. In Homo sapiens (Human), this protein is Collagen alpha-1(XI) chain (COL11A1).